Reading from the N-terminus, the 139-residue chain is Ribulose bisphosphate carboxylase small subunit (139 aa).

Belongs to the RuBisCO small chain family. In terms of assembly, heterohexadecamer of 8 large and 8 small subunits.

The protein resides in the plastid. Its subcellular location is the chloroplast. RuBisCO catalyzes two reactions: the carboxylation of D-ribulose 1,5-bisphosphate, the primary event in carbon dioxide fixation, as well as the oxidative fragmentation of the pentose substrate in the photorespiration process. Both reactions occur simultaneously and in competition at the same active site. Although the small subunit is not catalytic it is essential for maximal activity. This is Ribulose bisphosphate carboxylase small subunit from Trieres chinensis (Marine centric diatom).